Here is a 64-residue protein sequence, read N- to C-terminus: Large ribosomal subunit protein bL35 (64 aa).

Positions 1–64 (MPKNKTNSGA…RKSIKKLLGK (64 aa)) are disordered.

It belongs to the bacterial ribosomal protein bL35 family.

This is Large ribosomal subunit protein bL35 from Beutenbergia cavernae (strain ATCC BAA-8 / DSM 12333 / CCUG 43141 / JCM 11478 / NBRC 16432 / NCIMB 13614 / HKI 0122).